Reading from the N-terminus, the 222-residue chain is Ribosomal RNA small subunit methyltransferase I (222 aa).

The protein belongs to the methyltransferase superfamily. RsmI family.

It localises to the cytoplasm. The enzyme catalyses cytidine(1402) in 16S rRNA + S-adenosyl-L-methionine = 2'-O-methylcytidine(1402) in 16S rRNA + S-adenosyl-L-homocysteine + H(+). Functionally, catalyzes the 2'-O-methylation of the ribose of cytidine 1402 (C1402) in 16S rRNA. This is Ribosomal RNA small subunit methyltransferase I from Thermotoga maritima (strain ATCC 43589 / DSM 3109 / JCM 10099 / NBRC 100826 / MSB8).